Reading from the N-terminus, the 39-residue chain is Photosystem II reaction center protein L (39 aa).

A helical transmembrane segment spans residues 18-38; that stretch reads SLYLGLLLVFVTGVLFSSYFF.

It belongs to the PsbL family. PSII is composed of 1 copy each of membrane proteins PsbA, PsbB, PsbC, PsbD, PsbE, PsbF, PsbH, PsbI, PsbJ, PsbK, PsbL, PsbM, PsbT, PsbX, PsbY, PsbZ, Psb30/Ycf12, peripheral proteins PsbO, CyanoQ (PsbQ), PsbU, PsbV and a large number of cofactors. It forms dimeric complexes.

It localises to the cellular thylakoid membrane. In terms of biological role, one of the components of the core complex of photosystem II (PSII). PSII is a light-driven water:plastoquinone oxidoreductase that uses light energy to abstract electrons from H(2)O, generating O(2) and a proton gradient subsequently used for ATP formation. It consists of a core antenna complex that captures photons, and an electron transfer chain that converts photonic excitation into a charge separation. This subunit is found at the monomer-monomer interface and is required for correct PSII assembly and/or dimerization. This Synechococcus sp. (strain RCC307) protein is Photosystem II reaction center protein L.